Consider the following 574-residue polypeptide: High-affinity methionine permease (574 aa).

Residues 1 to 61 (MSEGRTFLSQ…TELDQGEKQL (61 aa)) are Cytoplasmic-facing. K28 is covalently cross-linked (Glycyl lysine isopeptide (Lys-Gly) (interchain with G-Cter in ubiquitin)). Residues 62-82 (GILSCIGLICNRMLGTGVFAV) form a helical membrane-spanning segment. Residues 83 to 92 (SSTIYTLCGS) are Extracellular-facing. Residues 93–113 (VGLALIMWAVGAIIAISGLYV) form a helical membrane-spanning segment. The Cytoplasmic segment spans residues 114–140 (YMEFGTAIPKNGGEKNYLEAIFRKPKF). A helical membrane pass occupies residues 141-161 (FITCMYAAYIFFLGWAAGNSI). Over 162–182 (NTAIMFLTAADTEVTKWNQRG) the chain is Extracellular. Residues 183–203 (IGVAVVFFAFLINSLNVKIGL) form a helical membrane-spanning segment. The Cytoplasmic segment spans residues 204 to 207 (YLQN). The chain crosses the membrane as a helical span at residues 208–228 (ILGIFKIGIVLFISITGWVAL). The Extracellular segment spans residues 229–293 (GGGLKDGYQS…VRTLKIAGPT (65 aa)). Residues 294 to 314 (SMVFLAIIYIFVNIAYFAVVP) traverse the membrane as a helical segment. Topologically, residues 315-340 (KDKLISSKLILAADFFDIVFGGQAKR) are cytoplasmic. A helical transmembrane segment spans residues 341 to 361 (AAAALVGLSALGNVLSVIFSQ). Residues 362-418 (GRIIQQLGREGVLPFSNFFASSKPFNSPMVGLFQHFIVCTVTILAPPPGDAYLLVQN) are Extracellular-facing. The helical transmembrane segment at 419–439 (LISYPMNIINFAISAGLLWIY) threads the bilayer. The Cytoplasmic segment spans residues 440–455 (WQRRQGKIEWNPPIKA). A helical transmembrane segment spans residues 456–476 (GVFVTGFFTLSNLYLIIAPYV). The Extracellular segment spans residues 477-490 (PPSNGESVYSSMPY). The helical transmembrane segment at 491-511 (WIHCVIAWGIFFFGGVYYVVW) threads the bilayer. Topologically, residues 512 to 574 (AQLLPRWGHY…HYKSEQEKSL (63 aa)) are cytoplasmic. At T552 the chain carries Phosphothreonine. S573 is subject to Phosphoserine.

The protein to yeast low affinity methionine permease (MUP3).

Its subcellular location is the membrane. Functionally, high affinity permease for methionine. This Saccharomyces cerevisiae (strain ATCC 204508 / S288c) (Baker's yeast) protein is High-affinity methionine permease (MUP1).